The sequence spans 1392 residues: Condensin complex subunit 1 (1392 aa).

The interaction with SMC2 and SMC4 stretch occupies residues 1 to 593 (MSPHNFEFHL…TGSKDSPSVP (593 aa)). Residues Ser-20 and Ser-575 each carry the phosphoserine modification. Disordered regions lie at residues 569–602 (EAST…QSND), 945–966 (REEQ…ETTM), and 1293–1392 (FETG…RHRS). Positions 945-960 (REEQEHRAKEPKEKTA) are enriched in basic and acidic residues. Residues Ser-1300, Ser-1305, Ser-1320, and Ser-1323 each carry the phosphoserine modification. Residue Thr-1329 is modified to Phosphothreonine. Positions 1332 to 1353 (PRRTKPGRPQTQQRKKSQRKAK) match the Bipartite nuclear localization signal motif. The segment covering 1344–1353 (QRKKSQRKAK) has biased composition (basic residues). 4 positions are modified to phosphoserine: Ser-1358, Ser-1361, Ser-1362, and Ser-1367. A compositionally biased stretch (acidic residues) spans 1360-1373 (ESSEDELSAEMTEE). 2 positions are modified to phosphothreonine; by CDK1: Thr-1375 and Thr-1380. Ser-1386 carries the post-translational modification Phosphoserine.

Belongs to the CND1 (condensin subunit 1) family. Component of the condensin complex, which contains the SMC2 and SMC4 heterodimer, and three non SMC subunits that probably regulate the complex: NCAPH/BRRN1, NCAPD2/CAPD2 and NCAPG. Interacts with histones H1 and H3. In terms of processing, phosphorylated by CDK1. Its phosphorylation, as well as that of NCAPH and NCAPG subunits, activates the condensin complex and is required for chromosome condensation.

It is found in the nucleus. It localises to the cytoplasm. The protein localises to the chromosome. In terms of biological role, regulatory subunit of the condensin complex, a complex required for conversion of interphase chromatin into mitotic-like condense chromosomes. The condensin complex probably introduces positive supercoils into relaxed DNA in the presence of type I topoisomerases and converts nicked DNA into positive knotted forms in the presence of type II topoisomerases. May target the condensin complex to DNA via its C-terminal domain. May promote the resolution of double-strand DNA catenanes (intertwines) between sister chromatids. Condensin-mediated compaction likely increases tension in catenated sister chromatids, providing directionality for type II topoisomerase-mediated strand exchanges toward chromatid decatenation. Required for decatenation of non-centromeric ultrafine DNA bridges during anaphase. Early in neurogenesis, may play an essential role to ensure accurate mitotic chromosome condensation in neuron stem cells, ultimately affecting neuron pool and cortex size. This Mus musculus (Mouse) protein is Condensin complex subunit 1 (Ncapd2).